A 535-amino-acid chain; its full sequence is Cytochrome c oxidase subunit 1 (535 aa).

A helical transmembrane segment spans residues 17 to 37; that stretch reads ILYFIFAIFSGVIGSTMSLII. Residues glutamate 40, alanine 43, and glycine 45 each coordinate Ca(2+). 6 helical membrane-spanning segments follow: residues 58–78, 104–124, 147–167, 184–204, 236–256, and 268–288; these read VLVVGHALLMIFFLVMPGLVG, FWLLPPALVCLVASTLIESWA, LGIFAIHLTSISSLLGAINFI, PLFVWAIIITAVMLLLSLPVL, LFWFFGHPEVYILIVPGFGII, and VFGEISMVYAMASIAFLGFLV. Residue histidine 63 coordinates Fe(II)-heme a. Histidine 242 contacts Cu cation. The segment at residues 242–246 is a cross-link (1'-histidyl-3'-tyrosine (His-Tyr)); sequence HPEVY. Residue tyrosine 246 coordinates O2. Cu cation is bound by residues histidine 291 and histidine 292. 2 helical membrane passes run 311–331 and 339–359; these read MVIAVPTGIKIFSWLATLYGG and MLYAIAFLFLFTIGGLTGVAL. Histidine 369 and aspartate 370 together coordinate Mg(2+). 2 helical membrane-spanning segments follow: residues 373-393 and 413-433; these read YVVGHFHYVLSMGAIFSLFAG and IQFWLIFVGANVIFMPMHFLG. Histidine 377 is a binding site for heme a3. Histidine 379 is a Fe(II)-heme a binding site. Proline 442 serves as a coordination point for Ca(2+). Residues 453-473 traverse the membrane as a helical segment; it reads YVSSIGSVIAIISLALFIYII.

The protein belongs to the heme-copper respiratory oxidase family. Component of the cytochrome c oxidase (complex IV, CIV), a multisubunit enzyme composed of a catalytic core of 3 subunits and several supernumerary subunits. The complex exists as a monomer or a dimer and forms supercomplexes (SCs) in the inner mitochondrial membrane with ubiquinol-cytochrome c oxidoreductase (cytochrome b-c1 complex, complex III, CIII). It depends on heme as a cofactor. Requires Cu cation as cofactor.

It localises to the mitochondrion inner membrane. It catalyses the reaction 4 Fe(II)-[cytochrome c] + O2 + 8 H(+)(in) = 4 Fe(III)-[cytochrome c] + 2 H2O + 4 H(+)(out). It functions in the pathway energy metabolism; oxidative phosphorylation. In terms of biological role, component of the cytochrome c oxidase, the last enzyme in the mitochondrial electron transport chain which drives oxidative phosphorylation. The respiratory chain contains 3 multisubunit complexes succinate dehydrogenase (complex II, CII), ubiquinol-cytochrome c oxidoreductase (cytochrome b-c1 complex, complex III, CIII) and cytochrome c oxidase (complex IV, CIV), that cooperate to transfer electrons derived from NADH and succinate to molecular oxygen, creating an electrochemical gradient over the inner membrane that drives transmembrane transport and the ATP synthase. Cytochrome c oxidase is the component of the respiratory chain that catalyzes the reduction of oxygen to water. Electrons originating from reduced cytochrome c in the intermembrane space (IMS) are transferred via the dinuclear copper A center (CU(A)) of subunit 2 and heme A of subunit 1 to the active site in subunit 1, a binuclear center (BNC) formed by heme A3 and copper B (CU(B)). The BNC reduces molecular oxygen to 2 water molecules using 4 electrons from cytochrome c in the IMS and 4 protons from the mitochondrial matrix. This Wickerhamomyces canadensis (Yeast) protein is Cytochrome c oxidase subunit 1 (COX1).